Reading from the N-terminus, the 250-residue chain is Probable S-methyl-5'-thioinosine phosphorylase (250 aa).

Phosphate contacts are provided by residues threonine 14 and 56–57; that span reads RH. Methionine 189 provides a ligand contact to substrate. Residue threonine 190 participates in phosphate binding. 213 to 215 is a binding site for substrate; the sequence is NWA.

The protein belongs to the PNP/MTAP phosphorylase family. MTAP subfamily. In terms of assembly, homotrimer.

It catalyses the reaction S-methyl-5'-thioinosine + phosphate = 5-(methylsulfanyl)-alpha-D-ribose 1-phosphate + hypoxanthine. It participates in purine metabolism; purine nucleoside salvage. In terms of biological role, catalyzes the reversible phosphorylation of S-methyl-5'-thioinosine (MTI) to hypoxanthine and 5-methylthioribose-1-phosphate. Involved in the breakdown of S-methyl-5'-thioadenosine (MTA), a major by-product of polyamine biosynthesis. Catabolism of (MTA) occurs via deamination to MTI and phosphorolysis to hypoxanthine. The chain is Probable S-methyl-5'-thioinosine phosphorylase from Xanthomonas campestris pv. campestris (strain ATCC 33913 / DSM 3586 / NCPPB 528 / LMG 568 / P 25).